The primary structure comprises 250 residues: Homeobox protein Dlx4a (250 aa).

The homeobox DNA-binding region spans 123–182 (IRKPRTIYSSLQLQALNQRFQQTQYLALPERADLAAKLGLTQTQVKIWFQNKRSKYKKIM). Residues 182–202 (MKHGSSGPEGEHLQAASASGA) are disordered.

This sequence belongs to the distal-less homeobox family.

The protein localises to the nucleus. This chain is Homeobox protein Dlx4a (dlx4a), found in Danio rerio (Zebrafish).